The following is a 360-amino-acid chain: Photosystem II protein D1 1 (360 aa).

Transmembrane regions (helical) follow at residues Y29–T46, H118–L133, and W142–A156. Residue H118 participates in chlorophyll a binding. Pheophytin a is bound at residue Y126. Residues D170 and E189 each contribute to the [CaMn4O5] cluster site. Residues F197–L218 form a helical membrane-spanning segment. H198 contacts chlorophyll a. A quinone contacts are provided by residues H215 and S264 to F265. Residue H215 coordinates Fe cation. H272 serves as a coordination point for Fe cation. A helical transmembrane segment spans residues F274 to L288. [CaMn4O5] cluster-binding residues include H332, E333, D342, and A344. The propeptide occupies S345 to G360.

The protein belongs to the reaction center PufL/M/PsbA/D family. As to quaternary structure, PSII is composed of 1 copy each of membrane proteins PsbA, PsbB, PsbC, PsbD, PsbE, PsbF, PsbH, PsbI, PsbJ, PsbK, PsbL, PsbM, PsbT, PsbX, PsbY, PsbZ, Psb30/Ycf12, peripheral proteins PsbO, CyanoQ (PsbQ), PsbU, PsbV and a large number of cofactors. It forms dimeric complexes. It depends on The D1/D2 heterodimer binds P680, chlorophylls that are the primary electron donor of PSII, and subsequent electron acceptors. It shares a non-heme iron and each subunit binds pheophytin, quinone, additional chlorophylls, carotenoids and lipids. D1 provides most of the ligands for the Mn4-Ca-O5 cluster of the oxygen-evolving complex (OEC). There is also a Cl(-1) ion associated with D1 and D2, which is required for oxygen evolution. The PSII complex binds additional chlorophylls, carotenoids and specific lipids. as a cofactor. In terms of processing, C-terminally processed by CtpA; processing is essential to allow assembly of the oxygen-evolving complex and photosynthetic growth. Tyr-161 forms a radical intermediate that is referred to as redox-active TyrZ, YZ or Y-Z. Post-translationally, C-terminally processed by CtpA; processing is essential to allow assembly of the oxygen-evolving complex and thus photosynthetic growth.

The protein localises to the cellular thylakoid membrane. It carries out the reaction 2 a plastoquinone + 4 hnu + 2 H2O = 2 a plastoquinol + O2. Photosystem II (PSII) is a light-driven water:plastoquinone oxidoreductase that uses light energy to abstract electrons from H(2)O, generating O(2) and a proton gradient subsequently used for ATP formation. It consists of a core antenna complex that captures photons, and an electron transfer chain that converts photonic excitation into a charge separation. The D1/D2 (PsbA/PsbD) reaction center heterodimer binds P680, the primary electron donor of PSII as well as several subsequent electron acceptors. This chain is Photosystem II protein D1 1, found in Synechocystis sp. (strain ATCC 27184 / PCC 6803 / Kazusa).